Here is a 633-residue protein sequence, read N- to C-terminus: Threonine--tRNA ligase (633 aa).

The region spanning 1-61 (MINVYFSDNS…TEDCKFEVIT (61 aa)) is the TGS domain. A catalytic region spans residues 242–533 (DHRKIGKELE…LIEHHSGKLP (292 aa)). The Zn(2+) site is built by C333, H384, and H510.

This sequence belongs to the class-II aminoacyl-tRNA synthetase family. In terms of assembly, homodimer. It depends on Zn(2+) as a cofactor.

The protein localises to the cytoplasm. It catalyses the reaction tRNA(Thr) + L-threonine + ATP = L-threonyl-tRNA(Thr) + AMP + diphosphate + H(+). Its function is as follows. Catalyzes the attachment of threonine to tRNA(Thr) in a two-step reaction: L-threonine is first activated by ATP to form Thr-AMP and then transferred to the acceptor end of tRNA(Thr). Also edits incorrectly charged L-seryl-tRNA(Thr). The chain is Threonine--tRNA ligase from Ehrlichia ruminantium (strain Gardel).